A 366-amino-acid polypeptide reads, in one-letter code: Ferredoxin--NADP reductase (366 aa).

Aspartate 51, glutamine 59, tyrosine 64, valine 104, phenylalanine 139, aspartate 308, and threonine 349 together coordinate FAD.

This sequence belongs to the ferredoxin--NADP reductase type 2 family. In terms of assembly, homodimer. Requires FAD as cofactor.

It carries out the reaction 2 reduced [2Fe-2S]-[ferredoxin] + NADP(+) + H(+) = 2 oxidized [2Fe-2S]-[ferredoxin] + NADPH. In Polaromonas sp. (strain JS666 / ATCC BAA-500), this protein is Ferredoxin--NADP reductase.